The primary structure comprises 459 residues: Cysteine--tRNA ligase (459 aa).

C29 serves as a coordination point for Zn(2+). The short motif at 31–41 (VTTYDYCHIGH) is the 'HIGH' region element. Zn(2+) contacts are provided by C210, H235, and E239. The 'KMSKS' region motif lies at 267-271 (KMSKS). An ATP-binding site is contributed by K270.

It belongs to the class-I aminoacyl-tRNA synthetase family. As to quaternary structure, monomer. Requires Zn(2+) as cofactor.

Its subcellular location is the cytoplasm. The enzyme catalyses tRNA(Cys) + L-cysteine + ATP = L-cysteinyl-tRNA(Cys) + AMP + diphosphate. This is Cysteine--tRNA ligase from Idiomarina loihiensis (strain ATCC BAA-735 / DSM 15497 / L2-TR).